The following is a 496-amino-acid chain: Autophagy-related protein 21 (496 aa).

Residues 1-35 (MKVLQFNQDATCCVVAASSHQISIFNCDPFGKCFE) form a WD 1 repeat. Residues 41–86 (SKKKTSNNNGTASNSESRNNEESILITNGSRDRTDAEEEEDNEDNA) form a disordered region. The span at 46 to 57 (SNNNGTASNSES) shows a compositional bias: low complexity. The segment covering 75-84 (DAEEEEDNED) has biased composition (acidic residues). The WD 2 repeat unit spans residues 148–190 (VMNRKRMCVLLESDQIFIYDISCMKPLETIDLWEDHYKRSQAN). Threonine 213 bears the Phosphothreonine mark. The residue at position 237 (serine 237) is a Phosphoserine. WD repeat units lie at residues 294-334 (VHKG…DYMS), 346-385 (TRLCNLYQLAFDKSMTMIGCVGDTDTIHLFKLDDASNSLP), and 448-488 (VNES…GECV). The short motif at 342–346 (FRRGT) is the L/FRRG motif element.

Belongs to the WD repeat PROPPIN family.

It localises to the cytoplasm. The protein localises to the vacuole membrane. Functionally, required for cytoplasm to vacuole transport (Cvt) vesicles formation and mitophagy. Involved in binding of phosphatidylethanolamine to ATG8 and in recruitment of ATG8 and ATG5 to the pre-autophagosomal structure. Protects ATG8 from ARG4-mediated cleavage. Essential for maturation of proaminopeptidase I. The polypeptide is Autophagy-related protein 21 (ATG21) (Saccharomyces cerevisiae (strain YJM789) (Baker's yeast)).